Reading from the N-terminus, the 360-residue chain is Threonine synthase (360 aa).

An N6-(pyridoxal phosphate)lysine modification is found at Lys69. Pyridoxal 5'-phosphate contacts are provided by residues Asn95, 196 to 200 (GNAGN), and Thr326.

The protein belongs to the threonine synthase family. As to quaternary structure, homodimer. Pyridoxal 5'-phosphate serves as cofactor.

The enzyme catalyses O-phospho-L-homoserine + H2O = L-threonine + phosphate. It functions in the pathway amino-acid biosynthesis; L-threonine biosynthesis; L-threonine from L-aspartate: step 5/5. Functionally, catalyzes the gamma-elimination of phosphate from L-phosphohomoserine and the beta-addition of water to produce L-threonine. In Mycobacterium leprae (strain TN), this protein is Threonine synthase (thrC).